The chain runs to 623 residues: Riboflavin biosynthesis protein PYRR, chloroplastic (623 aa).

The N-terminal 45 residues, 1–45, are a transit peptide targeting the chloroplast; it reads MPLPQPLLGGASPAPARAASSFLHPLLHTRHRVSTAPAAASSFVP. Residues 52–181 form the CMP/dCMP-type deaminase domain; it reads ANDAMLLRRA…ALRNEGIQVD (130 aa).

This sequence in the C-terminal section; belongs to the YbiA family.

Its subcellular location is the plastid. The protein resides in the chloroplast. The catalysed reaction is 5-amino-6-(5-phospho-D-ribitylamino)uracil + NADP(+) = 5-amino-6-(5-phospho-D-ribosylamino)uracil + NADPH + H(+). It catalyses the reaction 2,5-diamino-6-hydroxy-4-(5-phosphoribosylamino)-pyrimidine + H2O = 2,5,6-triamino-4-hydroxypyrimidine + D-ribose 5-phosphate. The enzyme catalyses 5-amino-6-(5-phospho-D-ribosylamino)uracil + H2O = 5,6-diaminouracil + D-ribose 5-phosphate. Its pathway is cofactor biosynthesis; riboflavin biosynthesis; 5-amino-6-(D-ribitylamino)uracil from GTP: step 3/4. Functionally, pyrimidine reductase involved in the riboflavin biosynthesis pathway. Also has a non-functional N-terminal deaminase domain that lacks the catalytically essential zinc-binding residues. 39% activity when NADH replaces NADPH. No evidence for a phosphatase activity conferred by the N-terminal domain. Catalyzes the hydrolysis of the N-glycosidic bond in the first two intermediates of riboflavin biosynthesis, which are highly reactive metabolites, yielding relatively innocuous products. Thus, can divert a surplus of harmful intermediates into relatively harmless products and pre-empt the damage these intermediates would otherwise do. Has no activity against GTP, nucleoside monophosphates or ADP-ribose. This chain is Riboflavin biosynthesis protein PYRR, chloroplastic (PYRR), found in Zea mays (Maize).